A 568-amino-acid polypeptide reads, in one-letter code: 2-succinyl-5-enolpyruvyl-6-hydroxy-3-cyclohexene-1-carboxylate synthase (568 aa).

It belongs to the TPP enzyme family. MenD subfamily. Homodimer. Mg(2+) serves as cofactor. Mn(2+) is required as a cofactor. Requires thiamine diphosphate as cofactor.

The enzyme catalyses isochorismate + 2-oxoglutarate + H(+) = 5-enolpyruvoyl-6-hydroxy-2-succinyl-cyclohex-3-ene-1-carboxylate + CO2. The protein operates within quinol/quinone metabolism; 1,4-dihydroxy-2-naphthoate biosynthesis; 1,4-dihydroxy-2-naphthoate from chorismate: step 2/7. It participates in quinol/quinone metabolism; menaquinone biosynthesis. Its function is as follows. Catalyzes the thiamine diphosphate-dependent decarboxylation of 2-oxoglutarate and the subsequent addition of the resulting succinic semialdehyde-thiamine pyrophosphate anion to isochorismate to yield 2-succinyl-5-enolpyruvyl-6-hydroxy-3-cyclohexene-1-carboxylate (SEPHCHC). This Haemophilus influenzae (strain 86-028NP) protein is 2-succinyl-5-enolpyruvyl-6-hydroxy-3-cyclohexene-1-carboxylate synthase.